Here is a 210-residue protein sequence, read N- to C-terminus: Cytochrome c biogenesis ATP-binding export protein CcmA (210 aa).

Residues Leu3–Leu205 form the ABC transporter domain. Gly37–Thr44 is an ATP binding site.

Belongs to the ABC transporter superfamily. CcmA exporter (TC 3.A.1.107) family. In terms of assembly, the complex is composed of two ATP-binding proteins (CcmA) and two transmembrane proteins (CcmB).

The protein localises to the cell inner membrane. The catalysed reaction is heme b(in) + ATP + H2O = heme b(out) + ADP + phosphate + H(+). Part of the ABC transporter complex CcmAB involved in the biogenesis of c-type cytochromes; once thought to export heme, this seems not to be the case, but its exact role is uncertain. Responsible for energy coupling to the transport system. The polypeptide is Cytochrome c biogenesis ATP-binding export protein CcmA (Pseudomonas putida (strain ATCC 47054 / DSM 6125 / CFBP 8728 / NCIMB 11950 / KT2440)).